The primary structure comprises 132 residues: Fluoride-specific ion channel FluC 3 (132 aa).

4 helical membrane passes run 4–24 (ILLV…FGGW), 32–52 (FPVG…LIMY), 66–86 (IFLT…GYES), and 95–115 (LMLM…AVYL). Residues G74 and T77 each contribute to the Na(+) site.

It belongs to the fluoride channel Fluc/FEX (TC 1.A.43) family.

It localises to the cell membrane. It catalyses the reaction fluoride(in) = fluoride(out). Its activity is regulated as follows. Na(+) is not transported, but it plays an essential structural role and its presence is essential for fluoride channel function. Its function is as follows. Fluoride-specific ion channel. Important for reducing fluoride concentration in the cell, thus reducing its toxicity. The sequence is that of Fluoride-specific ion channel FluC 3 from Methanosarcina barkeri (strain Fusaro / DSM 804).